The chain runs to 452 residues: UDP-N-acetylmuramoylalanine--D-glutamate ligase (452 aa).

119 to 125 (GSNGKTT) contributes to the ATP binding site.

Belongs to the MurCDEF family.

The protein localises to the cytoplasm. It catalyses the reaction UDP-N-acetyl-alpha-D-muramoyl-L-alanine + D-glutamate + ATP = UDP-N-acetyl-alpha-D-muramoyl-L-alanyl-D-glutamate + ADP + phosphate + H(+). It functions in the pathway cell wall biogenesis; peptidoglycan biosynthesis. Its function is as follows. Cell wall formation. Catalyzes the addition of glutamate to the nucleotide precursor UDP-N-acetylmuramoyl-L-alanine (UMA). This Streptococcus pyogenes serotype M6 (strain ATCC BAA-946 / MGAS10394) protein is UDP-N-acetylmuramoylalanine--D-glutamate ligase.